The sequence spans 651 residues: Carboxypeptidase S1 homolog A (651 aa).

The N-terminal stretch at 1 to 19 is a signal peptide; it reads MHLATGLAVALPFIGAASA. C50 and C121 are disulfide-bonded. N-linked (GlcNAc...) asparagine glycans are attached at residues N77, N125, N128, N161, N184, and N202. The active site involves S238. 5 N-linked (GlcNAc...) asparagine glycosylation sites follow: N260, N299, N308, N347, and N410. Intrachain disulfides connect C325/C361 and C332/C354. D458 is an active-site residue. Substrate is bound at residue C461. Residues N474 and N504 are each glycosylated (N-linked (GlcNAc...) asparagine). Residue H515 is part of the active site. E516 provides a ligand contact to substrate. The segment at 604-630 is disordered; it reads KSPAGKKQGPPPTSTSPPSPTSSSEGS. Residues 612–623 show a composition bias toward pro residues; the sequence is GPPPTSTSPPSP. Residue S625 is the site of GPI-anchor amidated serine attachment. Positions 626–651 are cleaved as a propeptide — removed in mature form; that stretch reads SSEGSVKEFSVSVLGVSVLAAITFFL.

It belongs to the peptidase S10 family.

It localises to the cell membrane. The enzyme catalyses Preferential release of a C-terminal arginine or lysine residue.. Functionally, extracellular serine carboxypeptidase that contributes to pathogenicity. The sequence is that of Carboxypeptidase S1 homolog A (SCPA) from Arthroderma otae (strain ATCC MYA-4605 / CBS 113480) (Microsporum canis).